Reading from the N-terminus, the 530-residue chain is Pancreatic secretory granule membrane major glycoprotein GP2 (530 aa).

An N-terminal signal peptide occupies residues 1–21; that stretch reads MVACDLLWLAAASCLLTLVFP. An N-linked (GlcNAc...) asparagine glycan is attached at N33. 11 disulfides stabilise this stretch: C41–C52, C56–C150, C78–C168, C100–C138, C106–C173, C131–C139, C183–C193, C187–C202, C204–C234, C222–C313, and C254–C277. Residues 54 to 74 form a D10C region; sequence DPCQNHTVLNDPSRSTENTVS. Residues N58 and N127 are each glycosylated (N-linked (GlcNAc...) asparagine). The EGF-like domain occupies 179–223; sequence APKKCEIACRPEEECVFQNNSWTCVCRQDLNVSDTLSLQPLLDCG. N-linked (GlcNAc...) asparagine glycosylation is found at N197 and N209. The interval 221-314 is ZP-N; sequence DCGANEIKVK…FLVNVNFQCA (94 aa). The 257-residue stretch at 221-477 folds into the ZP domain; sequence DCGANEIKVK…PSCSTSRLRS (257 aa). N284 and N320 each carry an N-linked (GlcNAc...) asparagine glycan. The tract at residues 315-338 is flexible ZP-N/ZP-C linker; it reads YPLDMNVSLQTALQPIVSSLNVDV. Positions 339–350 are internal hydrophobic patch (IHP); sequence GGAGEFTVTMAL. The segment at 339–477 is ZP-C; it reads GGAGEFTVTM…PSCSTSRLRS (139 aa). Disulfide bonds link C394–C454, C415–C470, and C459–C466. An external hydrophobic patch (EHP) region spans residues 484–492; it reads LTRVLDIGP. N505 carries GPI-anchor amidated asparagine lipidation. A propeptide spans 506–530 (removed in mature form); that stretch reads GTPRNTGFLLAWPTFFLPVFLAWLF.

As to quaternary structure, interacts with SYCN. Interacts with bacterial adhesin fimH. N-glycosylated. Expressed in pancreas.

It localises to the zymogen granule membrane. Its subcellular location is the secreted. It is found in the cell membrane. The protein localises to the apical cell membrane. The protein resides in the membrane raft. It localises to the endosome. Functionally, functions as an intestinal M-cell transcytotic receptor specific of type-I-piliated bacteria that participates in the mucosal immune response toward these bacteria. At the apical membrane of M-cells it binds fimH, a protein of the bacteria type I pilus tip. Internalizes bound bacteria, like E.coli and S.typhimurium, from the lumen of the intestine and delivers them, through M-cells, to the underlying organized lymphoid follicles where they are captured by antigen-presenting dendritic cells to elicit a mucosal immune response. The sequence is that of Pancreatic secretory granule membrane major glycoprotein GP2 from Rattus norvegicus (Rat).